The chain runs to 301 residues: 2-dehydropantoate 2-reductase (301 aa).

NADP(+)-binding positions include Gly11–Gly16, Asn107, and Ala133. Asn107 is a substrate binding site. The active-site Proton donor is the Lys187. 4 residues coordinate substrate: Asn191, Asn195, Asn205, and Ser251. Glu263 lines the NADP(+) pocket.

It belongs to the ketopantoate reductase family.

It localises to the cytoplasm. It catalyses the reaction (R)-pantoate + NADP(+) = 2-dehydropantoate + NADPH + H(+). The protein operates within cofactor biosynthesis; (R)-pantothenate biosynthesis; (R)-pantoate from 3-methyl-2-oxobutanoate: step 2/2. Catalyzes the NADPH-dependent reduction of ketopantoate into pantoic acid. The sequence is that of 2-dehydropantoate 2-reductase from Listeria innocua serovar 6a (strain ATCC BAA-680 / CLIP 11262).